We begin with the raw amino-acid sequence, 92 residues long: uncharacterized protein (92 aa).

The next 3 membrane-spanning stretches (helical) occupy residues 1–21 (MEVLPLVSGICCILGGIGVIL), 29–49 (IIMLALLEIGMIGLIVSCYYL), and 51–71 (IAIVSSLCEPICTVILLLGYL).

It is found in the cell membrane. This is an uncharacterized protein from Methanocaldococcus jannaschii (strain ATCC 43067 / DSM 2661 / JAL-1 / JCM 10045 / NBRC 100440) (Methanococcus jannaschii).